The chain runs to 123 residues: Ribonuclease P protein component (123 aa).

This sequence belongs to the RnpA family. In terms of assembly, consists of a catalytic RNA component (M1 or rnpB) and a protein subunit.

The catalysed reaction is Endonucleolytic cleavage of RNA, removing 5'-extranucleotides from tRNA precursor.. In terms of biological role, RNaseP catalyzes the removal of the 5'-leader sequence from pre-tRNA to produce the mature 5'-terminus. It can also cleave other RNA substrates such as 4.5S RNA. The protein component plays an auxiliary but essential role in vivo by binding to the 5'-leader sequence and broadening the substrate specificity of the ribozyme. The chain is Ribonuclease P protein component from Streptococcus pneumoniae serotype 4 (strain ATCC BAA-334 / TIGR4).